The sequence spans 842 residues: Protein P (842 aa).

The tract at residues 1–177 is terminal protein domain (TP); that stretch reads MPLSYQHFRR…FCGSPYSWEQ (177 aa). Positions 178 to 345 are spacer; the sequence is ELHHGAFLDG…YCLSHLVNLL (168 aa). Positions 186-273 are disordered; the sequence is DGPSRMGEES…AKNIASRSAS (88 aa). The span at 223-239 shows a compositional bias: polar residues; the sequence is GPQSQQRPLDRSQQGRS. The interval 346-689 is polymerase/reverse transcriptase domain (RT); that stretch reads EDWGPCTEHG…YLNLYPVARQ (344 aa). The Reverse transcriptase domain maps to 356–599; the sequence is RHHIRIPRTP…YSLNFMGYVI (244 aa). Positions 428, 550, and 551 each coordinate Mg(2+).

It belongs to the hepadnaviridae P protein family.

The enzyme catalyses DNA(n) + a 2'-deoxyribonucleoside 5'-triphosphate = DNA(n+1) + diphosphate. It catalyses the reaction Endonucleolytic cleavage to 5'-phosphomonoester.. With respect to regulation, activated by host HSP70 and HSP40 in vitro to be able to bind the epsilon loop of the pgRNA. Because deletion of the RNase H region renders the protein partly chaperone-independent, the chaperones may be needed indirectly to relieve occlusion of the RNA-binding site by this domain. Inhibited by several reverse-transcriptase inhibitors: Lamivudine, Adefovir and Entecavir. In terms of biological role, multifunctional enzyme that converts the viral RNA genome into dsDNA in viral cytoplasmic capsids. This enzyme displays a DNA polymerase activity that can copy either DNA or RNA templates, and a ribonuclease H (RNase H) activity that cleaves the RNA strand of RNA-DNA heteroduplexes in a partially processive 3'- to 5'-endonucleasic mode. Neo-synthesized pregenomic RNA (pgRNA) are encapsidated together with the P protein, and reverse-transcribed inside the nucleocapsid. Initiation of reverse-transcription occurs first by binding the epsilon loop on the pgRNA genome, and is initiated by protein priming, thereby the 5'-end of (-)DNA is covalently linked to P protein. Partial (+)DNA is synthesized from the (-)DNA template and generates the relaxed circular DNA (RC-DNA) genome. After budding and infection, the RC-DNA migrates in the nucleus, and is converted into a plasmid-like covalently closed circular DNA (cccDNA). The activity of P protein does not seem to be necessary for cccDNA generation, and is presumably released from (+)DNA by host nuclear DNA repair machinery. The chain is Protein P from Homo sapiens (Human).